The chain runs to 269 residues: Zinc transporter ZupT (269 aa).

The next 8 membrane-spanning stretches (helical) occupy residues 11–31 (IALAVTLAAGLATAIGSLLVL), 40–60 (LLAFGLAFAGGAMVYVSLSEI), 80–100 (YGTLAFLLGVIVIVLIDHFIP), 125–145 (ALLTSIAITAHNFPEGLATFF), 158–178 (AFAIAIHNIPEGIAIAVPVYF), 187–207 (FSASLLSGLAEPVGAALGYWL), 217–237 (FGWVFGLIAGVMVFLALDELL), and 249–269 (TVYGLVAGMGTLAISLVLFKW). Fe(2+) is bound by residues N136 and E139. Zn(2+)-binding residues include E139 and H164. Positions 165, 168, and 197 each coordinate Fe(2+). E168 is a Zn(2+) binding site.

It belongs to the ZIP transporter (TC 2.A.5) family. ZupT subfamily.

Its subcellular location is the cell inner membrane. It catalyses the reaction Zn(2+)(in) = Zn(2+)(out). Mediates zinc uptake. May also transport other divalent cations. This Stenotrophomonas maltophilia (strain R551-3) protein is Zinc transporter ZupT.